A 315-amino-acid chain; its full sequence is Ribosomal RNA small subunit methyltransferase H (315 aa).

Residues 33-35 (GGH), aspartate 52, phenylalanine 84, aspartate 106, and glutamine 113 each bind S-adenosyl-L-methionine.

This sequence belongs to the methyltransferase superfamily. RsmH family.

Its subcellular location is the cytoplasm. It catalyses the reaction cytidine(1402) in 16S rRNA + S-adenosyl-L-methionine = N(4)-methylcytidine(1402) in 16S rRNA + S-adenosyl-L-homocysteine + H(+). Its function is as follows. Specifically methylates the N4 position of cytidine in position 1402 (C1402) of 16S rRNA. This is Ribosomal RNA small subunit methyltransferase H from Lactobacillus acidophilus (strain ATCC 700396 / NCK56 / N2 / NCFM).